Consider the following 332-residue polypeptide: Fructose-1,6-bisphosphatase class 1 (332 aa).

The Mg(2+) site is built by E89, D110, L112, and D113. Residues 113 to 116, N206, Y239, 257 to 259, and K269 each bind substrate; these read DGSS and YLY. Mg(2+) is bound at residue E275.

Belongs to the FBPase class 1 family. In terms of assembly, homotetramer. Mg(2+) is required as a cofactor.

It localises to the cytoplasm. The catalysed reaction is beta-D-fructose 1,6-bisphosphate + H2O = beta-D-fructose 6-phosphate + phosphate. It functions in the pathway carbohydrate biosynthesis; gluconeogenesis. In Shigella sonnei (strain Ss046), this protein is Fructose-1,6-bisphosphatase class 1.